The following is a 95-amino-acid chain: Large ribosomal subunit protein uL23 (95 aa).

This sequence belongs to the universal ribosomal protein uL23 family. In terms of assembly, part of the 50S ribosomal subunit. Contacts protein L29, and trigger factor when it is bound to the ribosome.

One of the early assembly proteins it binds 23S rRNA. One of the proteins that surrounds the polypeptide exit tunnel on the outside of the ribosome. Forms the main docking site for trigger factor binding to the ribosome. The sequence is that of Large ribosomal subunit protein uL23 from Pediococcus pentosaceus (strain ATCC 25745 / CCUG 21536 / LMG 10740 / 183-1w).